Here is a 182-residue protein sequence, read N- to C-terminus: ATP synthase subunit b, chloroplastic (182 aa).

The helical transmembrane segment at 33 to 55 (VLNIMLLLFGLIYVLKQFLGSLL) threads the bilayer.

The protein belongs to the ATPase B chain family. In terms of assembly, F-type ATPases have 2 components, F(1) - the catalytic core - and F(0) - the membrane proton channel. F(1) has five subunits: alpha(3), beta(3), gamma(1), delta(1), epsilon(1). F(0) has four main subunits: a(1), b(1), b'(1) and c(10-14). The alpha and beta chains form an alternating ring which encloses part of the gamma chain. F(1) is attached to F(0) by a central stalk formed by the gamma and epsilon chains, while a peripheral stalk is formed by the delta, b and b' chains.

It localises to the plastid. It is found in the chloroplast thylakoid membrane. In terms of biological role, f(1)F(0) ATP synthase produces ATP from ADP in the presence of a proton or sodium gradient. F-type ATPases consist of two structural domains, F(1) containing the extramembraneous catalytic core and F(0) containing the membrane proton channel, linked together by a central stalk and a peripheral stalk. During catalysis, ATP synthesis in the catalytic domain of F(1) is coupled via a rotary mechanism of the central stalk subunits to proton translocation. Its function is as follows. Component of the F(0) channel, it forms part of the peripheral stalk, linking F(1) to F(0). The chain is ATP synthase subunit b, chloroplastic from Antithamnion sp. (Red alga).